A 367-amino-acid chain; its full sequence is Phosphoribosylaminoimidazole-succinocarboxamide synthase (367 aa).

This sequence belongs to the SAICAR synthetase family.

It carries out the reaction 5-amino-1-(5-phospho-D-ribosyl)imidazole-4-carboxylate + L-aspartate + ATP = (2S)-2-[5-amino-1-(5-phospho-beta-D-ribosyl)imidazole-4-carboxamido]succinate + ADP + phosphate + 2 H(+). It functions in the pathway purine metabolism; IMP biosynthesis via de novo pathway; 5-amino-1-(5-phospho-D-ribosyl)imidazole-4-carboxamide from 5-amino-1-(5-phospho-D-ribosyl)imidazole-4-carboxylate: step 1/2. This is Phosphoribosylaminoimidazole-succinocarboxamide synthase from Shewanella halifaxensis (strain HAW-EB4).